Reading from the N-terminus, the 192-residue chain is dCTP deaminase, dUMP-forming (192 aa).

DCTP is bound by residues 101–106, D119, 127–129, Q148, Y162, and Q174; these read KSSLGR and TLE. The active-site Proton donor/acceptor is E129. Residues 169–192 are disordered; it reads SRYQGQRGPTPSRSWQSWRTWPTR. Residues 171–192 show a composition bias toward polar residues; the sequence is YQGQRGPTPSRSWQSWRTWPTR.

The protein belongs to the dCTP deaminase family. As to quaternary structure, homotrimer.

It carries out the reaction dCTP + 2 H2O = dUMP + NH4(+) + diphosphate. It participates in pyrimidine metabolism; dUMP biosynthesis; dUMP from dCTP: step 1/1. Functionally, bifunctional enzyme that catalyzes both the deamination of dCTP to dUTP and the hydrolysis of dUTP to dUMP without releasing the toxic dUTP intermediate. This is dCTP deaminase, dUMP-forming from Salinispora tropica (strain ATCC BAA-916 / DSM 44818 / JCM 13857 / NBRC 105044 / CNB-440).